The chain runs to 117 residues: uncharacterized protein (117 aa).

This is an uncharacterized protein from Homo sapiens (Human).